We begin with the raw amino-acid sequence, 817 residues long: Protein hunchback (817 aa).

3 disordered regions span residues 51–77 (PGTI…HSPL), 93–132 (HNGG…TSSA), and 187–252 (YSQQ…EDQD). The segment covering 62 to 76 (QQHSSMMASQPQHSP) has biased composition (low complexity). The segment covering 103 to 119 (FSDNSGAMTPSPNTNVG) has biased composition (polar residues). Residues 189-201 (QQQQQQQQRQLQQ) show a composition bias toward low complexity. C2H2-type zinc fingers lie at residues 287–309 (HKCK…ARTH), 316–338 (LQCP…IRKH), 344–366 (FQCD…RKSH), and 372–396 (YRCA…KYEH). Disordered stretches follow at residues 456–477 (PLQQ…SSVA), 491–513 (QNLA…SSQQ), 564–619 (QLQQ…QQTP), and 666–758 (APTS…AGNS). Positions 564–576 (QLQQQQQNKQANE) are enriched in low complexity. The span at 577 to 595 (NGEEDEEDNDEVDEDEEEF) shows a compositional bias: acidic residues. Over residues 680 to 694 (MPPTTSSPIHPSQVN) the composition is skewed to polar residues. The span at 721 to 758 (PTTANTSASSTASSSGNSSNSSSTSTSSNSNSSSAGNS) shows a compositional bias: low complexity. 2 C2H2-type zinc fingers span residues 764 to 786 (YECK…MGYH) and 792 to 816 (FKCN…RNAH).

This sequence belongs to the hunchback C2H2-type zinc-finger protein family.

The protein localises to the nucleus. Its function is as follows. Gap class segmentation protein that controls development of head structures. This Musca domestica (House fly) protein is Protein hunchback (hb).